We begin with the raw amino-acid sequence, 264 residues long: Glutamate racemase (264 aa).

Residues 10–11 and 42–43 each bind substrate; these read DS and YG. C73 serves as the catalytic Proton donor/acceptor. Position 74-75 (74-75) interacts with substrate; that stretch reads NT. The Proton donor/acceptor role is filled by C183. 184–185 contributes to the substrate binding site; the sequence is TH.

It belongs to the aspartate/glutamate racemases family.

The catalysed reaction is L-glutamate = D-glutamate. Its pathway is cell wall biogenesis; peptidoglycan biosynthesis. In terms of biological role, provides the (R)-glutamate required for cell wall biosynthesis. The sequence is that of Glutamate racemase from Streptococcus agalactiae serotype III (strain NEM316).